The sequence spans 297 residues: MKDRLFVISQYVLPHHLISRLAGCLAECRLPWVKNTFIKWFVRHFQVDMREAQIEEPTAYEHFNAFFTRALKDGARPLDSTPGAILNPCDGAISQLGKIEQGRIFQAKGHSFSAMELLGGDHERAAPFMGGAFATVYLSPKDYHRVHMPVSGTLREMVYVPGRIFSVNTVTAQGVPELFARNERVVCLFDTEHGPMAMVLVGAMIVASIETVWAGLVTPPKRSLKTFRYDEAARAPIHLEKGAEMGRFKLGSTVILLFGPDRVRWAEQLGPLSPVCMGESLGQAAITAAASEAIELQ.

Active-site charge relay system; for autoendoproteolytic cleavage activity residues include Asp90, His147, and Ser252. Ser252 acts as the Schiff-base intermediate with substrate; via pyruvic acid; for decarboxylase activity in catalysis. Position 252 is a pyruvic acid (Ser); by autocatalysis (Ser252).

Belongs to the phosphatidylserine decarboxylase family. PSD-B subfamily. Prokaryotic type I sub-subfamily. In terms of assembly, heterodimer of a large membrane-associated beta subunit and a small pyruvoyl-containing alpha subunit. Pyruvate serves as cofactor. In terms of processing, is synthesized initially as an inactive proenzyme. Formation of the active enzyme involves a self-maturation process in which the active site pyruvoyl group is generated from an internal serine residue via an autocatalytic post-translational modification. Two non-identical subunits are generated from the proenzyme in this reaction, and the pyruvate is formed at the N-terminus of the alpha chain, which is derived from the carboxyl end of the proenzyme. The autoendoproteolytic cleavage occurs by a canonical serine protease mechanism, in which the side chain hydroxyl group of the serine supplies its oxygen atom to form the C-terminus of the beta chain, while the remainder of the serine residue undergoes an oxidative deamination to produce ammonia and the pyruvoyl prosthetic group on the alpha chain. During this reaction, the Ser that is part of the protease active site of the proenzyme becomes the pyruvoyl prosthetic group, which constitutes an essential element of the active site of the mature decarboxylase.

Its subcellular location is the cell membrane. The enzyme catalyses a 1,2-diacyl-sn-glycero-3-phospho-L-serine + H(+) = a 1,2-diacyl-sn-glycero-3-phosphoethanolamine + CO2. The protein operates within phospholipid metabolism; phosphatidylethanolamine biosynthesis; phosphatidylethanolamine from CDP-diacylglycerol: step 2/2. Catalyzes the formation of phosphatidylethanolamine (PtdEtn) from phosphatidylserine (PtdSer). The protein is Phosphatidylserine decarboxylase proenzyme of Stutzerimonas stutzeri (strain A1501) (Pseudomonas stutzeri).